Consider the following 115-residue polypeptide: Nitrogenase-stabilizing/protective protein NifW (115 aa).

It belongs to the NifW family. In terms of assembly, homotrimer; associates with NifD.

May protect the nitrogenase Fe-Mo protein from oxidative damage. This Methylobacterium sp. (strain 4-46) protein is Nitrogenase-stabilizing/protective protein NifW.